A 367-amino-acid chain; its full sequence is Histidinol-phosphate aminotransferase 1 (367 aa).

Lys229 carries the post-translational modification N6-(pyridoxal phosphate)lysine.

Belongs to the class-II pyridoxal-phosphate-dependent aminotransferase family. Histidinol-phosphate aminotransferase subfamily. In terms of assembly, homodimer. Requires pyridoxal 5'-phosphate as cofactor.

The catalysed reaction is L-histidinol phosphate + 2-oxoglutarate = 3-(imidazol-4-yl)-2-oxopropyl phosphate + L-glutamate. It functions in the pathway amino-acid biosynthesis; L-histidine biosynthesis; L-histidine from 5-phospho-alpha-D-ribose 1-diphosphate: step 7/9. This Mesorhizobium japonicum (strain LMG 29417 / CECT 9101 / MAFF 303099) (Mesorhizobium loti (strain MAFF 303099)) protein is Histidinol-phosphate aminotransferase 1 (hisC1).